A 693-amino-acid polypeptide reads, in one-letter code: Elongation factor G (693 aa).

The tr-type G domain maps to 8–284 (HMVRNIGIAA…AVIDYLPAPD (277 aa)). Residues 17–24 (AHIDAGKT), 81–85 (DTPGH), and 135–138 (NKMD) contribute to the GTP site.

The protein belongs to the TRAFAC class translation factor GTPase superfamily. Classic translation factor GTPase family. EF-G/EF-2 subfamily.

The protein resides in the cytoplasm. In terms of biological role, catalyzes the GTP-dependent ribosomal translocation step during translation elongation. During this step, the ribosome changes from the pre-translocational (PRE) to the post-translocational (POST) state as the newly formed A-site-bound peptidyl-tRNA and P-site-bound deacylated tRNA move to the P and E sites, respectively. Catalyzes the coordinated movement of the two tRNA molecules, the mRNA and conformational changes in the ribosome. This chain is Elongation factor G, found in Nautilia profundicola (strain ATCC BAA-1463 / DSM 18972 / AmH).